The primary structure comprises 356 residues: Red-sensitive opsin-2 (356 aa).

The Extracellular segment spans residues 1–48 (MAEWANAAFAARRRGDETTRDNAFSYTNSNNTRDPFEGPNYHIAPRWV). N-linked (GlcNAc...) asparagine glycosylation is present at Asn30. A helical transmembrane segment spans residues 49–73 (YNVATVWMFFVVVASTFTNGLVLVA). Over 74–85 (TAKFKKLRHPLN) the chain is Cytoplasmic. Residues 86–111 (WILVNLAIADLGETLFASTISVINQV) form a helical membrane-spanning segment. Residues 112-125 (FGYFILGHPMCIFE) lie on the Extracellular side of the membrane. A disulfide bridge links Cys122 with Cys199. Residues 126–145 (GYTVSVCGIAGLWSLTVISW) traverse the membrane as a helical segment. Residues 146–164 (ERWVVVCKPFGNVKFDGKW) lie on the Cytoplasmic side of the membrane. A helical membrane pass occupies residues 165-188 (ASAGIIFSWVWAAVWCAPPIFGWS). The Extracellular portion of the chain corresponds to 189 to 214 (RYWPHGLKTSCGPDVFGGNEDPGVQS). Residues 215 to 242 (YMLVLMITCCILPLAIIILCYIAVFLAI) form a helical membrane-spanning segment. Residues 243 to 264 (HAVAQQQKDSESTQKAEKEVSR) are Cytoplasmic-facing. A helical transmembrane segment spans residues 265-288 (MVVVMILAFCLCWGPYTAFACFAA). Over 289–296 (ANPGYAFH) the chain is Extracellular. The helical transmembrane segment at 297 to 321 (PLAAAMPAYFAKSATIYNPIIYVFM) threads the bilayer. The residue at position 308 (Lys308) is an N6-(retinylidene)lysine. Over 322 to 356 (NRQFRVCIMQLFGKKVDDGSEVSTSKTEVSSVAPA) the chain is Cytoplasmic.

This sequence belongs to the G-protein coupled receptor 1 family. Opsin subfamily. Phosphorylated on some or all of the serine and threonine residues present in the C-terminal region.

It is found in the membrane. Its function is as follows. Visual pigments are the light-absorbing molecules that mediate vision. They consist of an apoprotein, opsin, covalently linked to cis-retinal. This is Red-sensitive opsin-2 (opn1lw2) from Danio rerio (Zebrafish).